We begin with the raw amino-acid sequence, 243 residues long: 1-(5-phosphoribosyl)-5-[(5-phosphoribosylamino)methylideneamino] imidazole-4-carboxamide isomerase (243 aa).

The Proton acceptor role is filled by D8. The Proton donor role is filled by D129.

This sequence belongs to the HisA/HisF family.

It is found in the cytoplasm. It carries out the reaction 1-(5-phospho-beta-D-ribosyl)-5-[(5-phospho-beta-D-ribosylamino)methylideneamino]imidazole-4-carboxamide = 5-[(5-phospho-1-deoxy-D-ribulos-1-ylimino)methylamino]-1-(5-phospho-beta-D-ribosyl)imidazole-4-carboxamide. It participates in amino-acid biosynthesis; L-histidine biosynthesis; L-histidine from 5-phospho-alpha-D-ribose 1-diphosphate: step 4/9. The protein is 1-(5-phosphoribosyl)-5-[(5-phosphoribosylamino)methylideneamino] imidazole-4-carboxamide isomerase of Moorella thermoacetica (strain ATCC 39073 / JCM 9320).